We begin with the raw amino-acid sequence, 361 residues long: 1-deoxy-D-xylulose 5-phosphate reductoisomerase (361 aa).

6 residues coordinate NADPH: threonine 12, glycine 13, serine 14, isoleucine 15, glycine 38, and asparagine 102. 1-deoxy-D-xylulose 5-phosphate is bound at residue lysine 103. An NADPH-binding site is contributed by glutamate 104. Aspartate 126 is a Mn(2+) binding site. Serine 127, glutamate 128, serine 152, and histidine 175 together coordinate 1-deoxy-D-xylulose 5-phosphate. Glutamate 128 contributes to the Mn(2+) binding site. Glycine 181 is an NADPH binding site. The 1-deoxy-D-xylulose 5-phosphate site is built by serine 188, asparagine 193, lysine 194, and glutamate 197. Glutamate 197 contacts Mn(2+).

This sequence belongs to the DXR family. The cofactor is Mg(2+). Requires Mn(2+) as cofactor.

It catalyses the reaction 2-C-methyl-D-erythritol 4-phosphate + NADP(+) = 1-deoxy-D-xylulose 5-phosphate + NADPH + H(+). The protein operates within isoprenoid biosynthesis; isopentenyl diphosphate biosynthesis via DXP pathway; isopentenyl diphosphate from 1-deoxy-D-xylulose 5-phosphate: step 1/6. In terms of biological role, catalyzes the NADPH-dependent rearrangement and reduction of 1-deoxy-D-xylulose-5-phosphate (DXP) to 2-C-methyl-D-erythritol 4-phosphate (MEP). The polypeptide is 1-deoxy-D-xylulose 5-phosphate reductoisomerase (Leifsonia xyli subsp. xyli (strain CTCB07)).